The primary structure comprises 150 residues: Globin-1 (150 aa).

Positions A11–Y150 constitute a Globin domain. Heme b is bound by residues H74 and H106.

Belongs to the globin family. As to quaternary structure, monomer.

This chain is Globin-1, found in Petromyzon marinus (Sea lamprey).